The following is a 504-amino-acid chain: Maturase K (504 aa).

This sequence belongs to the intron maturase 2 family. MatK subfamily.

It localises to the plastid. The protein localises to the chloroplast. Its function is as follows. Usually encoded in the trnK tRNA gene intron. Probably assists in splicing its own and other chloroplast group II introns. The protein is Maturase K of Quercus lyrata (Overcup oak).